A 68-amino-acid chain; its full sequence is Large ribosomal subunit protein bL32 (68 aa).

This sequence belongs to the bacterial ribosomal protein bL32 family.

The chain is Large ribosomal subunit protein bL32 from Onion yellows phytoplasma (strain OY-M).